The following is a 286-amino-acid chain: MDTHVRGTIRGAIDLMRIGNAVAAGVLTFTGAFVAGGFAVTTAHVTGAVAATIFATAAGNAINDYFDRAIDKINRPMRPIPRGAISERGAIVFSGFLFVAAVVSTSVLPLIAIVLALMNLLALVAYTELFKGLPGVGNAIVAYLTGSTFLFGAAAIGRITDFGVVVLFILAALATATREIIKDIEDLDGDRKEGLQTLPIVIGVTPAYRVATGVLLVAVIASIVPYVIGIFGIWYLTLVVPADMIMLIGVWQAPDNPTQGQQLLKRGMFVAAAAFVVGRAVVVAGI.

The next 8 membrane-spanning stretches (helical) occupy residues 21–41, 42–62, 96–116, 133–155, 162–181, 214–234, 235–255, and 266–286; these read AVAA…FAVT, TAHV…GNAI, FLFV…IVLA, LPGV…GAAA, FGVV…REII, VLLV…FGIW, YLTL…QAPD, and RGMF…VAGI.

Belongs to the UbiA prenyltransferase family. DGGGP synthase subfamily. Mg(2+) is required as a cofactor.

Its subcellular location is the cell membrane. It catalyses the reaction sn-3-O-(geranylgeranyl)glycerol 1-phosphate + (2E,6E,10E)-geranylgeranyl diphosphate = 2,3-bis-O-(geranylgeranyl)-sn-glycerol 1-phosphate + diphosphate. Its pathway is membrane lipid metabolism; glycerophospholipid metabolism. In terms of biological role, prenyltransferase that catalyzes the transfer of the geranylgeranyl moiety of geranylgeranyl diphosphate (GGPP) to the C2 hydroxyl of (S)-3-O-geranylgeranylglyceryl phosphate (GGGP). This reaction is the second ether-bond-formation step in the biosynthesis of archaeal membrane lipids. The polypeptide is Digeranylgeranylglyceryl phosphate synthase (Haloquadratum walsbyi (strain DSM 16790 / HBSQ001)).